The following is a 688-amino-acid chain: DNA-directed RNA polymerase subunit beta' (688 aa).

The Zn(2+) site is built by C69, C71, C87, and C90. Residues D497, D499, and D501 each coordinate Mg(2+).

This sequence belongs to the RNA polymerase beta' chain family. RpoC1 subfamily. As to quaternary structure, in plastids the minimal PEP RNA polymerase catalytic core is composed of four subunits: alpha, beta, beta', and beta''. When a (nuclear-encoded) sigma factor is associated with the core the holoenzyme is formed, which can initiate transcription. Requires Mg(2+) as cofactor. Zn(2+) is required as a cofactor.

The protein resides in the plastid. Its subcellular location is the chloroplast. It carries out the reaction RNA(n) + a ribonucleoside 5'-triphosphate = RNA(n+1) + diphosphate. In terms of biological role, DNA-dependent RNA polymerase catalyzes the transcription of DNA into RNA using the four ribonucleoside triphosphates as substrates. This Sinapis alba (White mustard) protein is DNA-directed RNA polymerase subunit beta'.